The sequence spans 568 residues: Oxygen-dependent choline dehydrogenase (568 aa).

6-35 (DYIIVGAGSAGCVLADRLSASGEHYILLLE) is a binding site for FAD. Histidine 470 acts as the Proton acceptor in catalysis.

This sequence belongs to the GMC oxidoreductase family. It depends on FAD as a cofactor.

The catalysed reaction is choline + A = betaine aldehyde + AH2. It catalyses the reaction betaine aldehyde + NAD(+) + H2O = glycine betaine + NADH + 2 H(+). Its pathway is amine and polyamine biosynthesis; betaine biosynthesis via choline pathway; betaine aldehyde from choline (cytochrome c reductase route): step 1/1. Functionally, involved in the biosynthesis of the osmoprotectant glycine betaine. Catalyzes the oxidation of choline to betaine aldehyde and betaine aldehyde to glycine betaine at the same rate. The chain is Oxygen-dependent choline dehydrogenase from Photobacterium profundum (strain SS9).